Here is a 137-residue protein sequence, read N- to C-terminus: 2-iminobutanoate/2-iminopropanoate deaminase (137 aa).

Position 2 is an N-acetylserine (serine 2). Residues lysine 13, lysine 60, and lysine 67 each carry the N6-succinyllysine modification. Residue threonine 74 is modified to Phosphothreonine.

It belongs to the RutC family. In terms of assembly, homotrimer. Interacts with YTHDF2. Liver and kidney.

The protein resides in the cytoplasm. It is found in the nucleus. It localises to the peroxisome. Its subcellular location is the mitochondrion. The catalysed reaction is 2-iminobutanoate + H2O = 2-oxobutanoate + NH4(+). It carries out the reaction 2-iminopropanoate + H2O = pyruvate + NH4(+). Catalyzes the hydrolytic deamination of enamine/imine intermediates that form during the course of normal metabolism. May facilitate the release of ammonia from these potentially toxic reactive metabolites, reducing their impact on cellular components. It may act on enamine/imine intermediates formed by several types of pyridoxal-5'-phosphate-dependent dehydratases including L-threonine dehydratase. In terms of biological role, also promotes endoribonucleolytic cleavage of some transcripts by promoting recruitment of the ribonuclease P/MRP complex. Acts by bridging YTHDF2 and the ribonuclease P/MRP complex. RIDA/HRSP12 binds to N6-methyladenosine (m6A)-containing mRNAs containing a 5'-GGUUC-3' motif: cooperative binding of RIDA/HRSP12 and YTHDF2 to such transcripts lead to recruitment of the ribonuclease P/MRP complex and subsequent endoribonucleolytic cleavage. The chain is 2-iminobutanoate/2-iminopropanoate deaminase from Rattus norvegicus (Rat).